We begin with the raw amino-acid sequence, 259 residues long: Light-harvesting complex stress-related protein 3.1, chloroplastic (259 aa).

The transit peptide at 1 to 45 (MLANVVSRKASGLRQTPARATVAVKSVSGRRTTAAEPQTAAPVAA) directs the protein to the chloroplast. Tyr51 is a binding site for chlorophyll b. Positions 66, 87, and 90 each coordinate chlorophyll a. Arg92 lines the chlorophyll b pocket. Residues 93–113 (VAMLAALGFVVGEQLQDFPLF) traverse the membrane as a helical segment. Gln130 lines the chlorophyll a pocket. The helical transmembrane segment at 137 to 157 (EPLLIAIGVAESYRVAVGWAT) threads the bilayer. Residues Glu147 and Arg150 each contribute to the chlorophyll b site. Residues Lys196, Glu197, Asn200, Arg202, and Gln214 each coordinate chlorophyll a. A helical membrane pass occupies residues 203 to 223 (LAMIAIAAFVAQELVEQTEIF).

This sequence belongs to the light-harvesting chlorophyll a/b-binding (LHC) protein family. Interacts with the photosystem II-light-harvesting complex II (PSII-LHCII) supercomplex to form PSII-LHCII-LHCSR3 supercomplex.

The protein localises to the plastid. The protein resides in the chloroplast thylakoid membrane. In terms of biological role, required for non-photochemical quenching (NPQ), a mechanism that converts and dissipates the harmful excess absorbed light energy into heat and protect the photosynthetic apparatus from photo-oxidative damage. NPQ includes dissipating excess light energy to heat (qE) and the reversible coupling of LHCII to photosystems (state transitions or qT), which are considered separate NPQ mechanisms. Is responsible for most of the excess light energy to heat dissipation (qE), also known as energy-dependent chlorophyll fluorescence quenching activity of chlorophyll excited states. Involved in a de-coupling and re-coupling of energy transfer to photosystem II (PSII) during qT. Binds chlorophyll a and b. Is able to sense luminal acidification of the thylakoid membranes, which occurs along with elevated electron flow caused by excess light. Establishes interactions with photosystem II (PSII) antenna components upon lumen acidification, and protonation of lumen-exposed, negatively charged residues both in LHCSR3 and in PSII antenna components. Mediates excitation energy transfer from light-harvesting complex II (LHCII) to photosystem I (PSI), rather than photosystem II (PSII), at low pH, which mimics the acidified lumen of the thylakoid membranes in high light-exposed chloroplasts. Activates PSI-dependent fluorescence quenching in addition to dissipating excitation energy in LHCII to avoid photooxidative stress under excess light. Contributes with PGRL1 to the regulation of electron flow upstream of photosystem I (PSI), and limits the accumulation of electrons on the PSI acceptor side, thus avoiding PSI photoinhibition. In Chlamydomonas reinhardtii (Chlamydomonas smithii), this protein is Light-harvesting complex stress-related protein 3.1, chloroplastic.